The sequence spans 256 residues: Hemin import ATP-binding protein HmuV (256 aa).

The region spanning 2–238 (ISAQNLVYSL…QALTMLYGAD (237 aa)) is the ABC transporter domain. Residue 34–41 (GPNGAGKS) participates in ATP binding.

It belongs to the ABC transporter superfamily. Heme (hemin) importer (TC 3.A.1.14.5) family. As to quaternary structure, the complex is composed of two ATP-binding proteins (HmuV), two transmembrane proteins (HmuU) and a solute-binding protein (HmuT).

Its subcellular location is the cell inner membrane. In terms of biological role, part of the ABC transporter complex HmuTUV involved in hemin import. Responsible for energy coupling to the transport system. The protein is Hemin import ATP-binding protein HmuV of Shigella dysenteriae serotype 1 (strain Sd197).